The primary structure comprises 613 residues: MSVLKKNLAGRLLIARDAVKKALNSIPCDVAGVYKMLGANGLVLYVGKAKDLKKRLRSYYNFNQMSDRILAMVGHITELDVIVTQSEAEALLLEAQLIKTLKPKYNIIMRDDKFYPYILLSKHEYPRIVKYRGRKEAGLGKCYGPFISSLVVKLVISALRKAFQLRSCSDNFFASRDRPCIEYEMRNCSAPCTRKISEEDYAKSVHMAHKVLTGKSKELQRELFDSMRKFSDNLDYESAMVYRDRLQALKSIQECVSFQTEMSCDADFVSIYGRSGTYCLQVISFRGGISYGSQPYFVDDGNYESESDVLGMFMLQVYSDPPGRVYVDCESDYCEVINAALERLLTRKVDILTAKSHEELKFLRLARNSAMEALNRRLRDKALPAELEELAELFGLPNPPERIEVYDNSHISGTHPFGVMVVCGKDGLLRKEYRKFKIQTVLNGDDYSMMHEVLFRRFSEESPSVPDFVLIDGGRGHISSAIQVLGDLGIPFACMAKGSNRNAGEEVFYLPDGRKICLDPDSKLMLYMRKIRDEAHRFAITSHRSSRDRTLSSAVLCDIPGVGSARRRALITYFGSIDGVKRARTDEISKVPGISIKLAQRIYAYLKQGMAQP.

Positions 29–107 constitute a GIY-YIG domain; the sequence is DVAGVYKMLG…IKTLKPKYNI (79 aa). Residues 217 to 252 form the UVR domain; it reads KELQRELFDSMRKFSDNLDYESAMVYRDRLQALKSI.

Belongs to the UvrC family. As to quaternary structure, interacts with UvrB in an incision complex.

It localises to the cytoplasm. In terms of biological role, the UvrABC repair system catalyzes the recognition and processing of DNA lesions. UvrC both incises the 5' and 3' sides of the lesion. The N-terminal half is responsible for the 3' incision and the C-terminal half is responsible for the 5' incision. The protein is UvrABC system protein C of Anaplasma marginale (strain St. Maries).